We begin with the raw amino-acid sequence, 181 residues long: Inorganic pyrophosphatase 2 (181 aa).

Residues Lys30, Arg44, and Tyr56 each coordinate substrate. Residues Asp66, Asp71, and Asp103 each contribute to the Mg(2+) site. Tyr142 lines the substrate pocket.

It belongs to the PPase family. Homohexamer. The cofactor is Mg(2+).

The protein localises to the cytoplasm. It catalyses the reaction diphosphate + H2O = 2 phosphate + H(+). In terms of biological role, catalyzes the hydrolysis of inorganic pyrophosphate (PPi) forming two phosphate ions. The sequence is that of Inorganic pyrophosphatase 2 from Pseudomonas syringae pv. tomato (strain ATCC BAA-871 / DC3000).